The chain runs to 276 residues: Glutamate 5-kinase (276 aa).

K14 is an ATP binding site. Residues S54, D141, and N157 each contribute to the substrate site. ATP is bound by residues 177 to 178 and 219 to 225; these read SD and TGGMLTK.

This sequence belongs to the glutamate 5-kinase family.

The protein resides in the cytoplasm. The enzyme catalyses L-glutamate + ATP = L-glutamyl 5-phosphate + ADP. It participates in amino-acid biosynthesis; L-proline biosynthesis; L-glutamate 5-semialdehyde from L-glutamate: step 1/2. Its function is as follows. Catalyzes the transfer of a phosphate group to glutamate to form L-glutamate 5-phosphate. This Listeria monocytogenes serotype 4a (strain HCC23) protein is Glutamate 5-kinase.